The following is a 396-amino-acid chain: Inositol polyphosphate multikinase (396 aa).

Over residues Met-1 to Pro-13 the composition is skewed to low complexity. The segment at Met-1–Val-22 is disordered. N-acetylalanine is present on Ala-2. Residue Ser-19 is modified to Phosphoserine. Lys-58 lines the ATP pocket. Arg-65 lines the substrate pocket. Residues Glu-114–Val-116 and Asp-127 each bind ATP. Substrate contacts are provided by residues Lys-129, Lys-143–Lys-150, and Gln-179. The short motif at Arg-300 to Gln-310 is the Nuclear localization signal element. Asp-365 provides a ligand contact to ATP.

The protein belongs to the inositol phosphokinase (IPK) family. Requires Mg(2+) as cofactor. In terms of tissue distribution, highly expressed in kidney, and at lower levels in hippocampus, brain cortex, cerebellum, heart and lung.

Its subcellular location is the nucleus. It carries out the reaction 1D-myo-inositol 1,4,5-trisphosphate + 2 ATP = 1D-myo-inositol 1,3,4,5,6-pentakisphosphate + 2 ADP + 2 H(+). The catalysed reaction is 1D-myo-inositol 1,3,4,6-tetrakisphosphate + ATP = 1D-myo-inositol 1,3,4,5,6-pentakisphosphate + ADP + H(+). It catalyses the reaction 1-octadecanoyl-2-(5Z,8Z,11Z,14Z)-eicosatetraenoyl-sn-glycero-3-phospho-1D-myo-inositol 4,5-bisphosphate + ATP = 1-octadecanoyl-2-(5Z,8Z,11Z,14Z-eicosatetraenoyl)-sn-glycero-3-phospho-(1D-myo-inositol 3,4,5-triphosphate) + ADP + H(+). The enzyme catalyses a 1,2-diacyl-sn-glycero-3-phospho-(1D-myo-inositol-4,5-bisphosphate) + ATP = a 1,2-diacyl-sn-glycero-3-phospho-(1D-myo-inositol-3,4,5-trisphosphate) + ADP + H(+). It carries out the reaction 1D-myo-inositol 1,4,5,6-tetrakisphosphate + ATP = 1D-myo-inositol 1,3,4,5,6-pentakisphosphate + ADP + H(+). The protein operates within phospholipid metabolism; phosphatidylinositol metabolism. In terms of biological role, inositol phosphate kinase with a broad substrate specificity. Phosphorylates inositol 1,4,5-trisphosphate (Ins(1,4,5)P3) first to inositol 1,3,4,5-tetrakisphosphate and then to inositol 1,3,4,5,6-pentakisphosphate (Ins(1,3,4,5,6)P5). Phosphorylates inositol 1,3,4,6-tetrakisphosphate (Ins(1,3,4,6)P4). Phosphorylates inositol 1,4,5,6-tetrakisphosphate (Ins(1,4,5,6)P4). Phosphorylates glycero-3-phospho-1D-myo-inositol 4,5-bisphosphate to glycero-3-phospho-1D-myo-inositol 3,4,5-trisphosphate. Plays an important role in MLKL-mediated necroptosis via its role in the biosynthesis of inositol pentakisphosphate (InsP5) and inositol hexakisphosphate (InsP6). Binding of these highly phosphorylated inositol phosphates to MLKL mediates the release of an N-terminal auto-inhibitory region, leading to activation of the kinase. Essential for activated phospho-MLKL to oligomerize and localize to the cell membrane during necroptosis. Required for normal embryonic development, probably via its role in the biosynthesis of inositol 1,3,4,5,6-pentakisphosphate (Ins(1,3,4,5,6)P5) and inositol hexakisphosphate (InsP6). This Rattus norvegicus (Rat) protein is Inositol polyphosphate multikinase (Ipmk).